Reading from the N-terminus, the 258-residue chain is Deoxyribose-phosphate aldolase (258 aa).

The active-site Proton donor/acceptor is D102. The Schiff-base intermediate with acetaldehyde role is filled by K165. K199 functions as the Proton donor/acceptor in the catalytic mechanism.

It belongs to the DeoC/FbaB aldolase family. DeoC type 2 subfamily.

It is found in the cytoplasm. The enzyme catalyses 2-deoxy-D-ribose 5-phosphate = D-glyceraldehyde 3-phosphate + acetaldehyde. It functions in the pathway carbohydrate degradation; 2-deoxy-D-ribose 1-phosphate degradation; D-glyceraldehyde 3-phosphate and acetaldehyde from 2-deoxy-alpha-D-ribose 1-phosphate: step 2/2. Catalyzes a reversible aldol reaction between acetaldehyde and D-glyceraldehyde 3-phosphate to generate 2-deoxy-D-ribose 5-phosphate. This is Deoxyribose-phosphate aldolase from Aliivibrio salmonicida (strain LFI1238) (Vibrio salmonicida (strain LFI1238)).